The sequence spans 536 residues: CTP synthase (536 aa).

The amidoligase domain stretch occupies residues Met-1 to Leu-267. Ser-13 lines the CTP pocket. Ser-13 provides a ligand contact to UTP. ATP-binding positions include Ser-14–Ile-19 and Asp-71. The Mg(2+) site is built by Asp-71 and Glu-141. CTP is bound by residues Asp-148 to Glu-150, Lys-188 to Gln-193, and Lys-224. Residues Lys-188–Gln-193 and Lys-224 each bind UTP. The Glutamine amidotransferase type-1 domain maps to Lys-292–Gln-534. Gly-354 is a binding site for L-glutamine. The active-site Nucleophile; for glutamine hydrolysis is Cys-381. Residues Leu-382–Gln-385, Glu-405, and Arg-462 each bind L-glutamine. Catalysis depends on residues His-507 and Glu-509.

The protein belongs to the CTP synthase family. In terms of assembly, homotetramer.

It catalyses the reaction UTP + L-glutamine + ATP + H2O = CTP + L-glutamate + ADP + phosphate + 2 H(+). The catalysed reaction is L-glutamine + H2O = L-glutamate + NH4(+). The enzyme catalyses UTP + NH4(+) + ATP = CTP + ADP + phosphate + 2 H(+). Its pathway is pyrimidine metabolism; CTP biosynthesis via de novo pathway; CTP from UDP: step 2/2. With respect to regulation, allosterically activated by GTP, when glutamine is the substrate; GTP has no effect on the reaction when ammonia is the substrate. The allosteric effector GTP functions by stabilizing the protein conformation that binds the tetrahedral intermediate(s) formed during glutamine hydrolysis. Inhibited by the product CTP, via allosteric rather than competitive inhibition. Functionally, catalyzes the ATP-dependent amination of UTP to CTP with either L-glutamine or ammonia as the source of nitrogen. Regulates intracellular CTP levels through interactions with the four ribonucleotide triphosphates. The sequence is that of CTP synthase from Prochlorococcus marinus (strain AS9601).